A 70-amino-acid chain; its full sequence is Beta-defensin 107 (70 aa).

The first 26 residues, 1-26, serve as a signal peptide directing secretion; that stretch reads MPGAMKIFVFILAALILLAQIFQART. Disulfide bonds link Cys41–Cys55 and Cys45–Cys64.

It belongs to the beta-defensin family. In terms of tissue distribution, specifically expressed in testis.

It localises to the secreted. Has antibacterial activity. This is Beta-defensin 107 (DEFB107A) from Homo sapiens (Human).